Consider the following 325-residue polypeptide: MSETATWQPSASIPNLLKRAAIMTEIRRFFADRGVLEVETPCMSQATVTDIHLVPFETRFVGPGHSQGMNLWLMTSPEYHMKRLLVAGCGPIFQLCRSFRNEEMGRHHNPEFTMLEWYRPHYDMYRLMNEVDDLLQQVLDCAPAESLSYQQAFQRYLEIDPLSADKAQLREAAAKLDLSNVADEEEDRDTLLQLLFTFGVEPNIGKEKPTFVYHFPASQASLAQISTEDHRVAERFEVYYKGIELANGFHELTDAREQEQRFEQDNRKRAARGLPQHPIDHNLIEALKVGMPDCSGVALGVDRLVMLALGAERLSDVIAFSVDRA.

76 to 78 lines the substrate pocket; that stretch reads SPE. ATP is bound by residues 100–102 and Asn109; that span reads RNE. Tyr118 contacts substrate. 244–245 is a binding site for ATP; it reads EL. Substrate is bound at residue Glu251. Gly300 is a binding site for ATP.

The protein belongs to the class-II aminoacyl-tRNA synthetase family. EpmA subfamily. Homodimer.

It carries out the reaction D-beta-lysine + L-lysyl-[protein] + ATP = N(6)-((3R)-3,6-diaminohexanoyl)-L-lysyl-[protein] + AMP + diphosphate + H(+). Its function is as follows. With EpmB is involved in the beta-lysylation step of the post-translational modification of translation elongation factor P (EF-P) on 'Lys-34'. Catalyzes the ATP-dependent activation of (R)-beta-lysine produced by EpmB, forming a lysyl-adenylate, from which the beta-lysyl moiety is then transferred to the epsilon-amino group of EF-P 'Lys-34'. This Escherichia fergusonii (strain ATCC 35469 / DSM 13698 / CCUG 18766 / IAM 14443 / JCM 21226 / LMG 7866 / NBRC 102419 / NCTC 12128 / CDC 0568-73) protein is Elongation factor P--(R)-beta-lysine ligase.